Here is a 360-residue protein sequence, read N- to C-terminus: Phenylalanine--tRNA ligase alpha subunit (360 aa).

Mg(2+) is bound at residue glutamate 260.

Belongs to the class-II aminoacyl-tRNA synthetase family. Phe-tRNA synthetase alpha subunit type 1 subfamily. In terms of assembly, tetramer of two alpha and two beta subunits. Mg(2+) is required as a cofactor.

It localises to the cytoplasm. The catalysed reaction is tRNA(Phe) + L-phenylalanine + ATP = L-phenylalanyl-tRNA(Phe) + AMP + diphosphate + H(+). This Beijerinckia indica subsp. indica (strain ATCC 9039 / DSM 1715 / NCIMB 8712) protein is Phenylalanine--tRNA ligase alpha subunit.